Here is a 95-residue protein sequence, read N- to C-terminus: Protein TusB (95 aa).

This sequence belongs to the DsrH/TusB family. Heterohexamer, formed by a dimer of trimers. The hexameric TusBCD complex contains 2 copies each of TusB, TusC and TusD. The TusBCD complex interacts with TusE.

It localises to the cytoplasm. Functionally, part of a sulfur-relay system required for 2-thiolation of 5-methylaminomethyl-2-thiouridine (mnm(5)s(2)U) at tRNA wobble positions. The protein is Protein TusB of Shigella sonnei (strain Ss046).